Consider the following 105-residue polypeptide: uncharacterized protein (105 aa).

Positions 2–42 (QVLIGTKLVTEGIDIKQLMMVIMLDNRLNIIELIQGVGRLR) constitute a Helicase C-terminal domain.

The protein belongs to the helicase family. Yeast subtelomeric Y' repeat subfamily.

This is an uncharacterized protein from Saccharomyces cerevisiae (strain ATCC 204508 / S288c) (Baker's yeast).